Here is a 544-residue protein sequence, read N- to C-terminus: GDP-mannose 4,6-dehydratase sdnI (544 aa).

Residues 16–21, Arg41, 64–65, and 86–90 each bind NADP(+); these read GITGQD, DM, and LAAQS. Ser90 serves as a coordination point for substrate. Residues Glu135 and Tyr157 each act as nucleophile in the active site. A substrate-binding site is contributed by Tyr157. Lys161 lines the NADP(+) pocket. Asn186 provides a ligand contact to substrate. NADP(+) is bound by residues His187 and Arg192. Substrate is bound by residues 192 to 200, Gly219, Arg225, and 303 to 306; these read RGTTFVTRK and RPVE. Residues 366-406 are disordered; the sequence is GETTSAVNSSPSSTAGDTYKASDGWSTSGAEGSEQTECSSV. Polar residues-rich tracts occupy residues 368–381 and 389–404; these read TTSA…STAG and GWST…TECS.

Belongs to the NAD(P)-dependent epimerase/dehydratase family. GDP-mannose 4,6-dehydratase subfamily. Requires NADP(+) as cofactor.

It catalyses the reaction GDP-alpha-D-mannose = GDP-4-dehydro-alpha-D-rhamnose + H2O. Its pathway is antibiotic biosynthesis. Its function is as follows. GDP-mannose 4,6-dehydratase; part of the gene cluster that mediates the biosynthesis of sordarin and hypoxysordarin, glycoside antibiotics with a unique tetracyclic diterpene aglycone structure. First, the geranylgeranyl diphosphate synthase sdnC constructs GGDP from farnesyl diphosphate and isopentenyl diphosphate. The diterpene cyclase sdnA then catalyzes the cyclization of GGDP to afford cycloaraneosene. Cycloaraneosene is then hydroxylated four times by the putative cytochrome P450 monooxygenases sdnB, sdnE, sdnF and sdnH to give a hydroxylated cycloaraneosene derivative such as cycloaraneosene-8,9,13,19-tetraol. Although the order of the hydroxylations is unclear, at least C8, C9 and C13 of the cycloaraneosene skeleton are hydroxylated before the sordaricin formation. Dehydration of the 13-hydroxy group of the hydroxylated cycloaraneosene derivative might be catalyzed by an unassigned hypothetical protein such as sdnG and sdnP to construct the cyclopentadiene moiety. The FAD-dependent oxidoreductase sdnN is proposed to catalyze the oxidation at C9 of the hydroxylated cycloaraneosene derivative and also catalyze the Baeyer-Villiger oxidation to give the lactone intermediate. The presumed lactone intermediate would be hydrolyzed to give an acrolein moiety and a carboxylate moiety. Then, [4+2]cycloaddition would occur between the acrolein moiety and the cyclopentadiene moiety to give sordaricin. SdnN might also be involved in the [4+2]cycloaddition after the hypothesized oxidation to accommodate the oxidized product and prompt the [4+2]cycloaddition. GDP-6-deoxy-D-altrose may be biosynthesized from GDP-D-mannose by the putative GDP-mannose-4,6-dehydratase sdnI and the short-chain dehydrogenase sdnK. The glycosyltransferase sdnJ catalyzes the attachment of 6-deoxy-D-altrose onto the 19-hydroxy group of sordaricin to give 4'-O-demethylsordarin. The methyltransferase sdnD would complete the biosynthesis of sordarin. Sordarin can be further modified into hypoxysordarin. The unique acyl chain at the 3'-hydroxy group of hypoxysordarin would be constructed by an iterative type I PKS sdnO and the trans-acting polyketide methyltransferase sdnL. SdnL would be responsible for the introduction of an alpha-methyl group of the polyketide chain. Alternatively, the beta-lactamase-like protein sdnR might be responsible for the cleavage and transfer of the polyketide chain from the PKS sdnO to sordarin. Two putative cytochrome P450 monooxygenases, sdnQ and sdnT, might catalyze the epoxidations of the polyketide chain to complete the biosynthesis of hypoxysordarin. Transcriptional regulators sdnM and sdnS are presumably encoded for the transcriptional regulation of the expression of the sdn gene cluster. In Sordaria araneosa (Pleurage araneosa), this protein is GDP-mannose 4,6-dehydratase sdnI.